Consider the following 320-residue polypeptide: Porphobilinogen deaminase (320 aa).

C241 is subject to S-(dipyrrolylmethanemethyl)cysteine.

This sequence belongs to the HMBS family. Monomer. It depends on dipyrromethane as a cofactor.

The catalysed reaction is 4 porphobilinogen + H2O = hydroxymethylbilane + 4 NH4(+). The protein operates within porphyrin-containing compound metabolism; protoporphyrin-IX biosynthesis; coproporphyrinogen-III from 5-aminolevulinate: step 2/4. Its function is as follows. Tetrapolymerization of the monopyrrole PBG into the hydroxymethylbilane pre-uroporphyrinogen in several discrete steps. This chain is Porphobilinogen deaminase, found in Thermobifida fusca (strain YX).